A 559-amino-acid polypeptide reads, in one-letter code: GTP diphosphokinase CRSH2, chloroplastic (559 aa).

The N-terminal 37 residues, 1–37, are a transit peptide targeting the chloroplast; that stretch reads MASAGGEVVVVDPAAAAVAPDVEHHAPAPRLTPAGSG. Positions 87–187 constitute an HD domain; the sequence is SLARALIVAA…LELAIRLDAM (101 aa). EF-hand domains are found at residues 449 to 484 and 486 to 518; these read ASAG…LGAG and KDAE…VELK. The Ca(2+) site is built by Asp462, Asn464, Asp466, Arg468, Glu473, Asp496, Asn498, Asp500, Ser502, and Glu507.

Belongs to the RelA/SpoT family. Expressed in shoots.

It localises to the plastid. The protein localises to the chloroplast. The enzyme catalyses GTP + ATP = guanosine 3'-diphosphate 5'-triphosphate + AMP. With respect to regulation, activated by calcium. In terms of biological role, possesses calcium-dependent ppGpp (guanosine 3'-diphosphate 5'-diphosphate) synthetase activity in vitro and is able to functionally complement E.coli relA mutants. May be involved in a rapid plant ppGpp-mediated response to pathogens and other stresses. This is GTP diphosphokinase CRSH2, chloroplastic from Oryza sativa subsp. japonica (Rice).